We begin with the raw amino-acid sequence, 470 residues long: MQQCNLAVDIGASSGRVIAGYLQNGKLQLEEVHRFDNKLIDLNNYFCWDIDRIYQEILMGIKSAVDNGYQPISLGIDTWAVDFVLLDENDMRLTDAVSYRDPRTDGMMEEVFSQISKERLYLETGIQFQKFNTMYQLQALKNSNPDLIEKATSFLMIPDYLNFLLTGKKVNEYTNATTTQLVNAFTKKWDIDLIEQLGFNSNMFMDIQPPESVIGNLRPELQEELGVDFNVILPATHDTGSAVVAVPEQENSIYISSGTWSLIGVENHFPICTTKALDYNFTNEGGADYRYRFLKNIMGLWMIQEVKRNFNDEFEFADFAAMAKGESFKSIVDVDDDRFLKPENMIEEIKAYCKETNQAIPQSPSEVAKCVFNSLAVSYQQAISQIEEIYEIDFPTIYVIGGGSKNEMLNQLIADTTGKTVIAGLSEATAIGNLIVQMMAIDQIDDMQQARQIIKHSFDLYTYAKVTMEG.

Residue 12–16 (ASSGR) coordinates ATP. Residues alanine 80 and 237–239 (HDT) each bind substrate. Aspartate 238 serves as the catalytic Proton acceptor. Position 259 (threonine 259) interacts with ATP. Asparagine 296 serves as a coordination point for substrate. Glutamine 304 serves as a coordination point for ATP. Cysteine 353 and cysteine 370 are oxidised to a cystine. Glycine 402 serves as a coordination point for ATP.

Belongs to the rhamnulokinase family. Mg(2+) is required as a cofactor.

It catalyses the reaction L-rhamnulose + ATP = L-rhamnulose 1-phosphate + ADP + H(+). Its pathway is carbohydrate degradation; L-rhamnose degradation; glycerone phosphate from L-rhamnose: step 2/3. In terms of biological role, involved in the catabolism of L-rhamnose (6-deoxy-L-mannose). Catalyzes the transfer of the gamma-phosphate group from ATP to the 1-hydroxyl group of L-rhamnulose to yield L-rhamnulose 1-phosphate. This is Rhamnulokinase from Oceanobacillus iheyensis (strain DSM 14371 / CIP 107618 / JCM 11309 / KCTC 3954 / HTE831).